Reading from the N-terminus, the 401-residue chain is Beta-ketoadipyl-CoA thiolase (401 aa).

The Acyl-thioester intermediate role is filled by C91. Residues H357 and C387 each act as proton acceptor in the active site.

The protein belongs to the thiolase-like superfamily. Thiolase family. Homotetramer.

The catalysed reaction is succinyl-CoA + acetyl-CoA = 3-oxoadipyl-CoA + CoA. Its pathway is aromatic compound metabolism; beta-ketoadipate pathway; acetyl-CoA and succinyl-CoA from 3-oxoadipate: step 2/2. Catalyzes thiolytic cleavage of beta-ketoadipyl-CoA to succinyl-CoA and acetyl-CoA. In Pseudomonas knackmussii (strain DSM 6978 / CCUG 54928 / LMG 23759 / B13), this protein is Beta-ketoadipyl-CoA thiolase (pcaF).